A 309-amino-acid polypeptide reads, in one-letter code: T-lymphocyte activation antigen CD86 (309 aa).

A signal peptide spans 1–23; the sequence is MDPRCTMGLAILIFVTVLLISDA. The Extracellular portion of the chain corresponds to 24–244; the sequence is VSVETQAYFN…EFPSPQTYWK (221 aa). Asparagine 33, asparagine 47, asparagine 92, asparagine 135, asparagine 146, asparagine 154, asparagine 175, asparagine 190, and asparagine 231 each carry an N-linked (GlcNAc...) asparagine glycan. The Ig-like V-type domain maps to 33–128; sequence NGTAYLPCPF…GSIILQQTLT (96 aa). Cysteine 40 and cysteine 110 are oxidised to a cystine. The Ig-like C2-type domain maps to 150–223; that stretch reads NSGINLTCTS…VVCVLETESM (74 aa). Cysteine 157 and cysteine 216 are joined by a disulfide. Residues 245–265 traverse the membrane as a helical segment; sequence EITASVTVALLLVMLLIIVCH. Over 266 to 309 the chain is Cytoplasmic; it reads KKPNQPSRPSNTASKLERDSNADRETINLKELEPQIASAKPNAE. The span at 269–279 shows a compositional bias: polar residues; it reads NQPSRPSNTAS. Residues 269-309 are disordered; it reads NQPSRPSNTASKLERDSNADRETINLKELEPQIASAKPNAE. Residues 280 to 298 are compositionally biased toward basic and acidic residues; that stretch reads KLERDSNADRETINLKELE.

Homodimer. Interacts with MARCH8. Interacts (via cytoplasmic domain) with PHB1 and PHB2; the interactions increases after priming with CD40. Interacts with CD28. In terms of processing, polyubiquitinated; which is promoted by MARCH8 and results in endocytosis and lysosomal degradation. In terms of tissue distribution, expressed on activated B-cells.

The protein resides in the cell membrane. Its function is as follows. Receptor involved in the costimulatory signal essential for T-lymphocyte proliferation and interleukin-2 production, by binding CD28 or CTLA-4. May play a critical role in the early events of T-cell activation and costimulation of naive T-cells, such as deciding between immunity and anergy that is made by T-cells within 24 hours after activation. Also involved in the regulation of B cells function, plays a role in regulating the level of IgG(1) produced. Upon CD40 engagement, activates NF-kappa-B signaling pathway via phospholipase C and protein kinase C activation. This is T-lymphocyte activation antigen CD86 (Cd86) from Mus musculus (Mouse).